Here is a 359-residue protein sequence, read N- to C-terminus: GATA-binding factor 1-A (359 aa).

Residues 1 to 21 (MDYTTLTTQDPDPNYTESGLA) form a disordered region. GATA-type zinc fingers lie at residues 178-202 (CVNC…CNAC) and 232-256 (CSNC…CNAC). 2 disordered regions span residues 271–311 (MKKE…SPYP) and 323–359 (PMGH…VTPP). The span at 279–291 (RNRKVSSRSKKKK) shows a compositional bias: basic residues.

In terms of tissue distribution, expressed in the developing ventral blood island, and in both tadpole and adult erythrocytes.

Its subcellular location is the nucleus. Its function is as follows. Transcription factor that acts synergistically with tal1/scl and lmo2 to specify embryonic dorsal mesoderm to a hematopoietic fate. The polypeptide is GATA-binding factor 1-A (gata1-a) (Xenopus laevis (African clawed frog)).